Reading from the N-terminus, the 332-residue chain is 3-ketodihydrosphingosine reductase (332 aa).

A signal peptide spans 1-25 (MLLLAAAGLVAFVLLLYMVSPLISP). At 26-270 (KPLALPGAHV…GNFNSSIGSD (245 aa)) the chain is on the cytoplasmic side. NADPH is bound by residues G39, S41, S42, G43, R64, K68, and D93. Residues 39–43 (GGSSG) carry the GXSXG motif. S172 acts as the Proton donor in catalysis. Y186 functions as the Proton acceptor in the catalytic mechanism. 2 residues coordinate NADP(+): Y186 and K190. K190 acts as the Lowers pKa of active site Tyr in catalysis. A helical transmembrane segment spans residues 271 to 291 (GYMLSSLTCGMAPVTSITEGL). Residues 292–293 (QQ) lie on the Lumenal side of the membrane. A helical transmembrane segment spans residues 294 to 314 (VVTMGLFRTIALFYLGSFDNI). Topologically, residues 315–332 (VRRCMVQKAKPEVVDKTA) are cytoplasmic.

This sequence belongs to the short-chain dehydrogenases/reductases (SDR) family.

The protein resides in the endoplasmic reticulum membrane. It catalyses the reaction sphinganine + NADP(+) = 3-oxosphinganine + NADPH + H(+). It participates in lipid metabolism; sphingolipid metabolism. In terms of biological role, catalyzes the reduction of 3'-oxosphinganine (3-ketodihydrosphingosine/KDS) to sphinganine (dihydrosphingosine/DHS), the second step of de novo sphingolipid biosynthesis. In Mus musculus (Mouse), this protein is 3-ketodihydrosphingosine reductase (Kdsr).